Here is a 59-residue protein sequence, read N- to C-terminus: Large ribosomal subunit protein uL30 (59 aa).

Belongs to the universal ribosomal protein uL30 family. As to quaternary structure, part of the 50S ribosomal subunit.

This chain is Large ribosomal subunit protein uL30, found in Buchnera aphidicola subsp. Schizaphis graminum (strain Sg).